The following is a 467-amino-acid chain: Chromosomal replication initiator protein DnaA (467 aa).

A domain I, interacts with DnaA modulators region spans residues 1–87 (MSSSLWLQCL…VGSRPVVAPK (87 aa)). Residues 87 to 130 (KPAPVRTAADVAAESSAPAQLAQRKPIHKTWDDDSAAADITHRS) are domain II. A domain III, AAA+ region region spans residues 131 to 347 (NVNPKHKFNN…GALNRVIANA (217 aa)). Residues Gly-175, Gly-177, Lys-178, and Thr-179 each coordinate ATP. Positions 348–467 (NFTGRPITID…YSNLIRTLSS (120 aa)) are domain IV, binds dsDNA.

Belongs to the DnaA family. In terms of assembly, oligomerizes as a right-handed, spiral filament on DNA at oriC.

Its subcellular location is the cytoplasm. Functionally, plays an essential role in the initiation and regulation of chromosomal replication. ATP-DnaA binds to the origin of replication (oriC) to initiate formation of the DNA replication initiation complex once per cell cycle. Binds the DnaA box (a 9 base pair repeat at the origin) and separates the double-stranded (ds)DNA. Forms a right-handed helical filament on oriC DNA; dsDNA binds to the exterior of the filament while single-stranded (ss)DNA is stabiized in the filament's interior. The ATP-DnaA-oriC complex binds and stabilizes one strand of the AT-rich DNA unwinding element (DUE), permitting loading of DNA polymerase. After initiation quickly degrades to an ADP-DnaA complex that is not apt for DNA replication. Binds acidic phospholipids. This is Chromosomal replication initiator protein DnaA from Vibrio cholerae serotype O1 (strain ATCC 39315 / El Tor Inaba N16961).